We begin with the raw amino-acid sequence, 1377 residues long: DNA-directed RNA polymerase subunit beta' (1377 aa).

Zn(2+) contacts are provided by Cys60, Cys62, Cys75, and Cys78. Residues Asp449, Asp451, and Asp453 each coordinate Mg(2+). Residues Cys777, Cys851, Cys858, and Cys861 each contribute to the Zn(2+) site.

The protein belongs to the RNA polymerase beta' chain family. As to quaternary structure, the RNAP catalytic core consists of 2 alpha, 1 beta, 1 beta' and 1 omega subunit. When a sigma factor is associated with the core the holoenzyme is formed, which can initiate transcription. It depends on Mg(2+) as a cofactor. Zn(2+) is required as a cofactor.

The catalysed reaction is RNA(n) + a ribonucleoside 5'-triphosphate = RNA(n+1) + diphosphate. Its function is as follows. DNA-dependent RNA polymerase catalyzes the transcription of DNA into RNA using the four ribonucleoside triphosphates as substrates. This Borreliella burgdorferi (strain ATCC 35210 / DSM 4680 / CIP 102532 / B31) (Borrelia burgdorferi) protein is DNA-directed RNA polymerase subunit beta'.